Consider the following 520-residue polypeptide: Putative tyrosine carboxypeptidase MATCAP2 (520 aa).

Residues 116–153 (EEKKYHSQKQSSSTYSKRCRKPSKSPNTSRSKDPRRMK) are disordered. H331 serves as a coordination point for Zn(2+). E332 (nucleophile) is an active-site residue. Residues H336 and E367 each contribute to the Zn(2+) site.

The cofactor is Zn(2+).

Functionally, putative tyrosine carboxypeptidase. The sequence is that of Putative tyrosine carboxypeptidase MATCAP2 from Homo sapiens (Human).